Reading from the N-terminus, the 768-residue chain is Photosystem I P700 chlorophyll a apoprotein A1 (768 aa).

Helical transmembrane passes span 76 to 99 (VFSAHFGHLAVIFIWMSAAFFHGA), 162 to 185 (LMALAIGALLMAAIMLHGGIYHYH), 201 to 225 (LNHHIAGLVGLGSIAWAGHCIHIGA), 310 to 328 (ISHHHLAFGVLAVLGGHLY), 369 to 392 (WHAQLGLNLAMIGSLSIIISHHMY), 408 to 434 (LGLFTHHMWIGGLFIVGAAAHAGIAMI), 456 to 478 (ALISHLNWACMFLGFHSFGLYIH), and 559 to 577 (FMIHHIHAFTIHVTLLILL). Residues Cys-601 and Cys-610 each contribute to the [4Fe-4S] cluster site. The next 2 membrane-spanning stretches (helical) occupy residues 617 to 638 (HVFLGLFWMYNGLSVVIFHFSW) and 682 to 704 (ISMYGLMFLGAHFVWAFSLMFLF). Residue His-693 participates in divinylchlorophyll a' binding. Divinyl chlorophyll a is bound by residues Met-701 and Tyr-709. Trp-710 contacts phylloquinone. A helical membrane pass occupies residues 742–762 (AVGAAHFLLGGIATTWAFFHA).

Belongs to the PsaA/PsaB family. In terms of assembly, the PsaA/B heterodimer binds the P700 divinyl chlorophyll special pair and subsequent electron acceptors. PSI consists of a core antenna complex that captures photons, and an electron transfer chain that converts photonic excitation into a charge separation. The cyanobacterial PSI reaction center is composed of one copy each of PsaA,B,C,D,E,F,I,J,K,L,M and X, and forms trimeric complexes. It depends on PSI electron transfer chain: 5 divinyl chlorophyll a, 1 divinyl chlorophyll a', 2 phylloquinones and 3 4Fe-4S clusters. PSI core antenna: 90 divinyl chlorophyll a, 22 carotenoids, 3 phospholipids and 1 galactolipid. P700 is a divinyl chlorophyll a/divinyl chlorophyll a' dimer, A0 is one or more divinyl chlorophyll a, A1 is one or both phylloquinones and FX is a shared 4Fe-4S iron-sulfur center. as a cofactor.

The protein resides in the cellular thylakoid membrane. It carries out the reaction reduced [plastocyanin] + hnu + oxidized [2Fe-2S]-[ferredoxin] = oxidized [plastocyanin] + reduced [2Fe-2S]-[ferredoxin]. Functionally, psaA and PsaB bind P700, the primary electron donor of photosystem I (PSI), as well as the electron acceptors A0, A1 and FX. PSI is a plastocyanin/cytochrome c6-ferredoxin oxidoreductase, converting photonic excitation into a charge separation, which transfers an electron from the donor P700 chlorophyll pair to the spectroscopically characterized acceptors A0, A1, FX, FA and FB in turn. Oxidized P700 is reduced on the lumenal side of the thylakoid membrane by plastocyanin or cytochrome c6. This chain is Photosystem I P700 chlorophyll a apoprotein A1, found in Prochlorococcus marinus (strain NATL1A).